A 123-amino-acid polypeptide reads, in one-letter code: CD59 glycoprotein (123 aa).

The signal sequence occupies residues 1–25 (MGSKGGFILLWLLSILAVLCHLGHS). Positions 26–103 (LQCYNCINPA…LCNKSDATIS (78 aa)) constitute a UPAR/Ly6 domain. 5 disulfide bridges follow: Cys-28/Cys-51, Cys-31/Cys-38, Cys-44/Cys-65, Cys-71/Cys-89, and Cys-90/Cys-95. The N-linked (GlcNAc...) asparagine glycan is linked to Asn-43. Ser-98 carries GPI-anchor amidated serine lipidation. The propeptide at 99–123 (DATISSGKTALLVILLLVATWHFCL) is removed in mature form.

Interacts with T-cell surface antigen CD2. Post-translationally, N- and O-glycosylated. As to expression, expressed in all tissues tested (lung, testis liver, kidney, spleen, heart and skeletal muscle). Highest levels in lung and spleen, lowest levels in liver and skeletal muscle.

The protein resides in the cell membrane. It localises to the secreted. Potent inhibitor of the complement membrane attack complex (MAC) action, which protects self-cells from damage during complement activation. Acts by binding to the beta-haipins of C8 (C8A and C8B) components of the assembling MAC, forming an intermolecular beta-sheet that prevents incorporation of the multiple copies of C9 required for complete formation of the osmolytic pore. The chain is CD59 glycoprotein from Sus scrofa (Pig).